Here is a 638-residue protein sequence, read N- to C-terminus: uncharacterized protein (638 aa).

The region spanning 1-138 (MDLVELDYLS…KIENALLKYK (138 aa)) is the CID domain. Disordered stretches follow at residues 318–338 (QPPL…YSLS) and 615–638 (LGKR…QESK).

This is an uncharacterized protein from Schizosaccharomyces pombe (strain 972 / ATCC 24843) (Fission yeast).